The following is a 1269-amino-acid chain: DNA-directed RNA polymerase subunit beta (1269 aa).

The protein belongs to the RNA polymerase beta chain family. The RNAP catalytic core consists of 2 alpha, 1 beta, 1 beta' and 1 omega subunit. When a sigma factor is associated with the core the holoenzyme is formed, which can initiate transcription.

It catalyses the reaction RNA(n) + a ribonucleoside 5'-triphosphate = RNA(n+1) + diphosphate. Functionally, DNA-dependent RNA polymerase catalyzes the transcription of DNA into RNA using the four ribonucleoside triphosphates as substrates. The chain is DNA-directed RNA polymerase subunit beta from Porphyromonas gingivalis (strain ATCC 33277 / DSM 20709 / CIP 103683 / JCM 12257 / NCTC 11834 / 2561).